Consider the following 276-residue polypeptide: Non-homologous end joining protein Ku (276 aa).

Residues 11-177 (ISFGLVHIPI…PEEIRSMEPL (167 aa)) form the Ku domain. Residues 256–276 (QVKTQQKKEAAPKKERRRKTS) form a disordered region.

The protein belongs to the prokaryotic Ku family. Homodimer. Interacts with LigD.

Its function is as follows. With LigD forms a non-homologous end joining (NHEJ) DNA repair enzyme, which repairs dsDNA breaks with reduced fidelity. Binds linear dsDNA with 5'- and 3'- overhangs but not closed circular dsDNA nor ssDNA. Recruits and stimulates the ligase activity of LigD. The polypeptide is Non-homologous end joining protein Ku (Heliobacterium modesticaldum (strain ATCC 51547 / Ice1)).